Reading from the N-terminus, the 603-residue chain is Replication protein A 70 kDa DNA-binding subunit (603 aa).

The tract at residues 131–152 (PKPAVTSNSKPIAKKEPSHNNN) is disordered. Residue S160 is modified to Phosphoserine. Positions 179 to 252 (WVIKARVTSK…QLKPANKQYS (74 aa)) form a DNA-binding region, OB. S420 carries the phosphoserine modification. A C4-type zinc finger spans residues 464-486 (CPQSDCNKKVVDEGNDQFRCEKC).

It belongs to the replication factor A protein 1 family. As to quaternary structure, component of the heterotrimeric canonical replication protein A complex (RPA).

The protein localises to the nucleus. Functionally, as part of the heterotrimeric replication protein A complex (RPA/RP-A), binds and stabilizes single-stranded DNA intermediates, that form during DNA replication or upon DNA stress. It prevents their reannealing and in parallel, recruits and activates different proteins and complexes involved in DNA metabolism. Thereby, it plays an essential role both in DNA replication and the cellular response to DNA damage. The polypeptide is Replication protein A 70 kDa DNA-binding subunit (Drosophila melanogaster (Fruit fly)).